The primary structure comprises 441 residues: Ribosomal protein uS12 methylthiotransferase RimO (441 aa).

Residues proline 7–proline 117 enclose the MTTase N-terminal domain. Positions 16, 52, 81, 148, 152, and 155 each coordinate [4Fe-4S] cluster. The Radical SAM core domain occupies leucine 134–arginine 371. A TRAM domain is found at lysine 374 to glycine 440.

Belongs to the methylthiotransferase family. RimO subfamily. [4Fe-4S] cluster serves as cofactor.

It is found in the cytoplasm. It catalyses the reaction L-aspartate(89)-[ribosomal protein uS12]-hydrogen + (sulfur carrier)-SH + AH2 + 2 S-adenosyl-L-methionine = 3-methylsulfanyl-L-aspartate(89)-[ribosomal protein uS12]-hydrogen + (sulfur carrier)-H + 5'-deoxyadenosine + L-methionine + A + S-adenosyl-L-homocysteine + 2 H(+). Its function is as follows. Catalyzes the methylthiolation of an aspartic acid residue of ribosomal protein uS12. The chain is Ribosomal protein uS12 methylthiotransferase RimO from Bradyrhizobium sp. (strain BTAi1 / ATCC BAA-1182).